A 543-amino-acid polypeptide reads, in one-letter code: CTP synthase (543 aa).

Residues 1–267 form an amidoligase domain region; it reads MAKFVFVTGG…CREVLDVLNL (267 aa). S13 contacts CTP. Residue S13 coordinates UTP. 14 to 19 is an ATP binding site; it reads SIGKGI. Y54 contributes to the L-glutamine binding site. D71 provides a ligand contact to ATP. 2 residues coordinate Mg(2+): D71 and E141. Residues 148-150, 188-193, and K224 contribute to the CTP site; these read DIE and KTKPTQ. Residues 188 to 193 and K224 each bind UTP; that span reads KTKPTQ. The region spanning 292-534 is the Glutamine amidotransferase type-1 domain; it reads KVALVGKYVQ…IEAAQQRLPN (243 aa). G354 is a binding site for L-glutamine. The active-site Nucleophile; for glutamine hydrolysis is C381. Residues 382–385, E405, and R462 each bind L-glutamine; that span reads LGMQ. Active-site residues include H507 and E509.

It belongs to the CTP synthase family. As to quaternary structure, homotetramer.

The catalysed reaction is UTP + L-glutamine + ATP + H2O = CTP + L-glutamate + ADP + phosphate + 2 H(+). It catalyses the reaction L-glutamine + H2O = L-glutamate + NH4(+). It carries out the reaction UTP + NH4(+) + ATP = CTP + ADP + phosphate + 2 H(+). The protein operates within pyrimidine metabolism; CTP biosynthesis via de novo pathway; CTP from UDP: step 2/2. Its activity is regulated as follows. Allosterically activated by GTP, when glutamine is the substrate; GTP has no effect on the reaction when ammonia is the substrate. The allosteric effector GTP functions by stabilizing the protein conformation that binds the tetrahedral intermediate(s) formed during glutamine hydrolysis. Inhibited by the product CTP, via allosteric rather than competitive inhibition. Catalyzes the ATP-dependent amination of UTP to CTP with either L-glutamine or ammonia as the source of nitrogen. Regulates intracellular CTP levels through interactions with the four ribonucleotide triphosphates. This is CTP synthase from Synechococcus sp. (strain WH7803).